Reading from the N-terminus, the 170-residue chain is Adenine phosphoribosyltransferase (170 aa).

The protein belongs to the purine/pyrimidine phosphoribosyltransferase family. Homodimer.

The protein localises to the cytoplasm. The enzyme catalyses AMP + diphosphate = 5-phospho-alpha-D-ribose 1-diphosphate + adenine. The protein operates within purine metabolism; AMP biosynthesis via salvage pathway; AMP from adenine: step 1/1. Catalyzes a salvage reaction resulting in the formation of AMP, that is energically less costly than de novo synthesis. The protein is Adenine phosphoribosyltransferase of Oceanobacillus iheyensis (strain DSM 14371 / CIP 107618 / JCM 11309 / KCTC 3954 / HTE831).